The sequence spans 611 residues: Guanylate-binding protein 6 (611 aa).

The GTPase domain (Globular) stretch occupies residues M1–C308. Residues S33–K275 enclose the GB1/RHD3-type G domain. GTP-binding positions include G43–S50, L65–S67, and D95–L99.

Belongs to the TRAFAC class dynamin-like GTPase superfamily. GB1/RHD3 GTPase family. GB1 subfamily.

The protein localises to the cytoplasmic vesicle. The catalysed reaction is GTP + H2O = GDP + phosphate + H(+). Functionally, interferon (IFN)-inducible GTPase that plays important roles in innate immunity against a diverse range of bacterial, viral and protozoan pathogens, such as bacterial pathogens Listeria monocytogenes and Mycobacterium bovis BCG as well as the protozoan pathogen Toxoplasma gondii. Confers protection to several pathogens, including the bacterial pathogens Listeria monocytogenes and Mycobacterium bovis BCG as well as the protozoan pathogen Toxoplasma gondii. This chain is Guanylate-binding protein 6 (Gbp6), found in Mus musculus (Mouse).